A 289-amino-acid chain; its full sequence is 33 kDa chaperonin (289 aa).

2 disulfides stabilise this stretch: C235/C237 and C268/C271.

It belongs to the HSP33 family. In terms of processing, under oxidizing conditions two disulfide bonds are formed involving the reactive cysteines. Under reducing conditions zinc is bound to the reactive cysteines and the protein is inactive.

Its subcellular location is the cytoplasm. Functionally, redox regulated molecular chaperone. Protects both thermally unfolding and oxidatively damaged proteins from irreversible aggregation. Plays an important role in the bacterial defense system toward oxidative stress. In Bacillus licheniformis (strain ATCC 14580 / DSM 13 / JCM 2505 / CCUG 7422 / NBRC 12200 / NCIMB 9375 / NCTC 10341 / NRRL NRS-1264 / Gibson 46), this protein is 33 kDa chaperonin.